We begin with the raw amino-acid sequence, 186 residues long: Protein GrpE (186 aa).

The protein belongs to the GrpE family. As to quaternary structure, homodimer.

It localises to the cytoplasm. In terms of biological role, participates actively in the response to hyperosmotic and heat shock by preventing the aggregation of stress-denatured proteins, in association with DnaK and GrpE. It is the nucleotide exchange factor for DnaK and may function as a thermosensor. Unfolded proteins bind initially to DnaJ; upon interaction with the DnaJ-bound protein, DnaK hydrolyzes its bound ATP, resulting in the formation of a stable complex. GrpE releases ADP from DnaK; ATP binding to DnaK triggers the release of the substrate protein, thus completing the reaction cycle. Several rounds of ATP-dependent interactions between DnaJ, DnaK and GrpE are required for fully efficient folding. This Novosphingobium aromaticivorans (strain ATCC 700278 / DSM 12444 / CCUG 56034 / CIP 105152 / NBRC 16084 / F199) protein is Protein GrpE.